Reading from the N-terminus, the 330-residue chain is Cyclin N-terminal domain-containing protein 1 (330 aa).

The 152-residue stretch at 27-178 (DALLHLAQQN…VLKSLNFRIN (152 aa)) folds into the Cyclin N-terminal domain.

Interacts with PRR19; this interaction promotes crossover formation. Interacts with RFC3 and RFC4; these interactions facilitate crossover formation. Interacts with CDC34; this interaction regulates the cell-cycle progression.

Its subcellular location is the nucleus. The protein localises to the cytoplasm. It is found in the chromosome. Plays a role in the different steps of crossover formation during meiotic recombination. Participates in the crossover differentiation step of crossover-specific recombination intermediates through its interaction with PRR19. In addition, stimulates crossover formation through the interactions with RFC3 and RFC4 and simultaneously regulates cell-cycle progression through interactions with CDC34 and subsequent ubiquitination of WEE1. May also participates in an active deselection process that destabilizes or removes excess pre-CO intermediates. In Homo sapiens (Human), this protein is Cyclin N-terminal domain-containing protein 1.